The primary structure comprises 263 residues: LIM and SH3 domain protein 1 (263 aa).

Met-1 carries the post-translational modification N-acetylmethionine. In terms of domain architecture, LIM zinc-binding spans 5 to 56; the sequence is CARCGKIVYPTEKVNCLDKYWHKACFHCETCKMTLNMKNYKGYEKKPYCNAH. At Lys-42 the chain carries N6-acetyllysine. Nebulin repeat units follow at residues 61 to 95 and 97 to 131; these read SFTM…KNKG and GFSV…KSRM. Position 68 is a phosphothreonine (Thr-68). Lys-75 carries the N6-methyllysine modification. Position 99 is a phosphoserine (Ser-99). A Phosphothreonine modification is found at Thr-104. The residue at position 112 (Lys-112) is an N6-succinyllysine. Phosphoserine is present on residues Ser-118 and Ser-134. The disordered stretch occupies residues 123-207; sequence HEEFEKSRMG…QRSAPGGGGK (85 aa). Residues 148–162 show a composition bias toward polar residues; the sequence is DSSSYRRPTEQQQPQ. Thr-156 bears the Phosphothreonine; by PKA mark. The 60-residue stretch at 204-263 folds into the SH3 domain; it reads GGGKRYRAVYDYSAADEDEVSFQDGDTIVNVQQIDDGWMYGTVERTGDTGMLPANYVEAI.

Interacts with F-actin. Interacts with KBTBD10. Interacts with ANKRD54.

It localises to the cytoplasm. The protein resides in the cell cortex. It is found in the cytoskeleton. In terms of biological role, plays an important role in the regulation of dynamic actin-based, cytoskeletal activities. Agonist-dependent changes in LASP1 phosphorylation may also serve to regulate actin-associated ion transport activities, not only in the parietal cell but also in certain other F-actin-rich secretory epithelial cell types. The polypeptide is LIM and SH3 domain protein 1 (Lasp1) (Mus musculus (Mouse)).